The chain runs to 848 residues: Aryl hydrocarbon receptor (848 aa).

Residue Met1 is modified to N-acetylmethionine. The propeptide occupies 1-10 (MNSSSANITY). Residues 1–10 (MNSSSANITY) are compositionally biased toward polar residues. Residues 1-39 (MNSSSANITYASRKRRKPVQKTVKPIPAEGIKSNPSKRH) are disordered. 2 consecutive short sequence motifs (nuclear localization signal) follow at residues 13–16 (RKRR) and 37–42 (KRHRDR). Positions 27-80 (PAEGIKSNPSKRHRDRLNTELDRLASLLPFPQDVINKLDKLSVLRLSVSYLRAK) constitute a bHLH domain. The DNA-binding stretch occupies residues 38–66 (RHRDRLNTELDRLASLLPFPQDVINKLDK). Required for maintaining the overall integrity of the AHR:ARNT heterodimer and its transcriptional activity stretches follow at residues 50–82 (LASLLPFPQDVINKLDKLSVLRLSVSYLRAKSF), 118–126 (LLQALNGFV), and 266–268 (FAI). The Nuclear export signal motif lies at 64–72 (LDKLSVLRL). The PAS 1 domain occupies 111–181 (NLQEGEFLLQ…RQLHWALNPS (71 aa)). The region spanning 275–342 (PSILEIRTKN…CAESHIRMIK (68 aa)) is the PAS 2 domain. The PAC domain maps to 348–386 (MIVFRLLTKNNRWTWVQSNARLLYKNGRPDYIIVTQRPL). Positions 824-848 (TTHLQPLHHPSEARPFPDLTSSGFL) are disordered.

Homodimer. Heterodimer; efficient DNA binding requires dimerization with another bHLH protein. Interacts with ARNT; the heterodimer ARNT:AHR binds to core DNA sequence 5'-TGCGTG-3' within the dioxin response element (DRE) of target gene promoters and activates their transcription. Binds MYBBP1A. Interacts with coactivators including SRC-1, RIP140 and NOCA7, and with the corepressor SMRT. Interacts with NEDD8 and IVNS1ABP. Interacts with BMAL1. Interacts with HSP90AB1. Interacts with TIPARP; leading to mono-ADP-ribosylation of AHR and subsequent inhibition of AHR. Mono-ADP-ribosylated, leading to inhibit transcription activator activity of AHR. As to expression, expressed in all tissues tested including blood, brain, heart, kidney, liver, lung, pancreas and skeletal muscle. Expressed in retinal photoreceptors.

The protein resides in the cytoplasm. It is found in the nucleus. Functionally, ligand-activated transcription factor that enables cells to adapt to changing conditions by sensing compounds from the environment, diet, microbiome and cellular metabolism, and which plays important roles in development, immunity and cancer. Upon ligand binding, translocates into the nucleus, where it heterodimerizes with ARNT and induces transcription by binding to xenobiotic response elements (XRE). Regulates a variety of biological processes, including angiogenesis, hematopoiesis, drug and lipid metabolism, cell motility and immune modulation. Xenobiotics can act as ligands: upon xenobiotic-binding, activates the expression of multiple phase I and II xenobiotic chemical metabolizing enzyme genes (such as the CYP1A1 gene). Mediates biochemical and toxic effects of halogenated aromatic hydrocarbons. Next to xenobiotics, natural ligands derived from plants, microbiota, and endogenous metabolism are potent AHR agonists. Tryptophan (Trp) derivatives constitute an important class of endogenous AHR ligands. Acts as a negative regulator of anti-tumor immunity: indoles and kynurenic acid generated by Trp catabolism act as ligand and activate AHR, thereby promoting AHR-driven cancer cell motility and suppressing adaptive immunity. Regulates the circadian clock by inhibiting the basal and circadian expression of the core circadian component PER1. Inhibits PER1 by repressing the CLOCK-BMAL1 heterodimer mediated transcriptional activation of PER1. The heterodimer ARNT:AHR binds to core DNA sequence 5'-TGCGTG-3' within the dioxin response element (DRE) of target gene promoters and activates their transcription. The protein is Aryl hydrocarbon receptor of Homo sapiens (Human).